The sequence spans 382 residues: D-alanine--D-alanine ligase (382 aa).

An ATP-grasp domain is found at 161–372; it reads KVVFEAAGLQ…YAELIDELIY (212 aa). 193 to 248 is an ATP binding site; that stretch reads VDRLGYPVFVKPARAGSSMGISKVDSLEGLDAAIAAAREHDLKLVIEAGIVGREIE. Residues Asp326, Glu339, and Asn341 each contribute to the Mg(2+) site.

It belongs to the D-alanine--D-alanine ligase family. Mg(2+) serves as cofactor. It depends on Mn(2+) as a cofactor.

The protein resides in the cytoplasm. The enzyme catalyses 2 D-alanine + ATP = D-alanyl-D-alanine + ADP + phosphate + H(+). Its pathway is cell wall biogenesis; peptidoglycan biosynthesis. Its function is as follows. Cell wall formation. The polypeptide is D-alanine--D-alanine ligase (Arthrobacter sp. (strain FB24)).